The primary structure comprises 337 residues: Ornithine carbamoyltransferase, catabolic (337 aa).

Carbamoyl phosphate-binding positions include 57–60, glutamine 84, arginine 108, and 135–138; these read STRT and HPTQ. Residues asparagine 167, aspartate 231, and 235-236 contribute to the L-ornithine site; that span reads SM. Carbamoyl phosphate-binding positions include 272–273 and arginine 317; that span reads CL.

Belongs to the aspartate/ornithine carbamoyltransferase superfamily. OTCase family.

The protein localises to the cytoplasm. The catalysed reaction is carbamoyl phosphate + L-ornithine = L-citrulline + phosphate + H(+). The protein operates within amino-acid degradation; L-arginine degradation via ADI pathway; carbamoyl phosphate from L-arginine: step 2/2. Reversibly catalyzes the transfer of the carbamoyl group from carbamoyl phosphate (CP) to the N(epsilon) atom of ornithine (ORN) to produce L-citrulline. The protein is Ornithine carbamoyltransferase, catabolic (arcB) of Streptococcus agalactiae.